Consider the following 270-residue polypeptide: Undecaprenyl-diphosphatase 1 (270 aa).

A run of 7 helical transmembrane segments spans residues 5–25 (YYVL…PIPI), 42–62 (IEGF…VLLI), 89–109 (FFFI…GVLF), 117–137 (LKGV…LWII), 192–212 (FSFL…ITDI), 220–240 (TLFV…YISL), and 250–270 (GNLK…LIFL).

The protein belongs to the UppP family.

Its subcellular location is the cell membrane. The catalysed reaction is di-trans,octa-cis-undecaprenyl diphosphate + H2O = di-trans,octa-cis-undecaprenyl phosphate + phosphate + H(+). Functionally, catalyzes the dephosphorylation of undecaprenyl diphosphate (UPP). Confers resistance to bacitracin. The protein is Undecaprenyl-diphosphatase 1 of Bacillus cereus (strain ATCC 14579 / DSM 31 / CCUG 7414 / JCM 2152 / NBRC 15305 / NCIMB 9373 / NCTC 2599 / NRRL B-3711).